A 68-amino-acid chain; its full sequence is ATP synthase F(0) complex subunit 8 (68 aa).

The chain crosses the membrane as a helical span at residues 8-24 (TWFTIIMAMLPTLYLIT). Lysine 54 bears the N6-acetyllysine; alternate mark. Lysine 54 is modified (N6-succinyllysine; alternate). The residue at position 57 (lysine 57) is an N6-acetyllysine.

This sequence belongs to the ATPase protein 8 family. In terms of assembly, component of the ATP synthase complex composed at least of ATP5F1A/subunit alpha, ATP5F1B/subunit beta, ATP5MC1/subunit c (homooctomer), MT-ATP6/subunit a, MT-ATP8/subunit 8, ATP5ME/subunit e, ATP5MF/subunit f, ATP5MG/subunit g, ATP5MK/subunit k, ATP5MJ/subunit j, ATP5F1C/subunit gamma, ATP5F1D/subunit delta, ATP5F1E/subunit epsilon, ATP5PF/subunit F6, ATP5PB/subunit b, ATP5PD/subunit d, ATP5PO/subunit OSCP. ATP synthase complex consists of a soluble F(1) head domain (subunits alpha(3) and beta(3)) - the catalytic core - and a membrane F(0) domain - the membrane proton channel (subunits c, a, 8, e, f, g, k and j). These two domains are linked by a central stalk (subunits gamma, delta, and epsilon) rotating inside the F1 region and a stationary peripheral stalk (subunits F6, b, d, and OSCP). Interacts with PRICKLE3.

The protein localises to the mitochondrion membrane. In terms of biological role, subunit 8, of the mitochondrial membrane ATP synthase complex (F(1)F(0) ATP synthase or Complex V) that produces ATP from ADP in the presence of a proton gradient across the membrane which is generated by electron transport complexes of the respiratory chain. ATP synthase complex consist of a soluble F(1) head domain - the catalytic core - and a membrane F(1) domain - the membrane proton channel. These two domains are linked by a central stalk rotating inside the F(1) region and a stationary peripheral stalk. During catalysis, ATP synthesis in the catalytic domain of F(1) is coupled via a rotary mechanism of the central stalk subunits to proton translocation. In vivo, can only synthesize ATP although its ATP hydrolase activity can be activated artificially in vitro. Part of the complex F(0) domain. This is ATP synthase F(0) complex subunit 8 from Papio hamadryas (Hamadryas baboon).